The primary structure comprises 233 residues: Synaptogyrin-1 (233 aa).

N-acetylmethionine is present on Met-1. Over 1 to 23 (MEGGAYGAGKAGGAFDPYTLVRQ) the chain is Cytoplasmic. Residues 20 to 173 (LVRQPHTILR…QAVLAFQRYQ (154 aa)) enclose the MARVEL domain. A helical membrane pass occupies residues 24–44 (PHTILRVVSWLFSIVVFGSIV). Residues 45-71 (NEGYLNSASEGEEFCIYNRNPNACSYG) are Lumenal-facing. The helical transmembrane segment at 72 to 92 (VAVGVLAFLTCLLYLALDVYF) threads the bilayer. At 93-103 (PQISSVKDRKK) the chain is on the cytoplasmic side. A helical transmembrane segment spans residues 104-124 (AVLSDIGVSAFWAFLWFVGFC). The Lumenal segment spans residues 125–148 (YLANQWQVSKPKDNPLNEGTDAAR). The chain crosses the membrane as a helical span at residues 149–169 (AAIAFSFFSIFTWAGQAVLAF). Topologically, residues 170 to 233 (QRYQIGADSA…EPQGYQSQGY (64 aa)) are cytoplasmic. The disordered stretch occupies residues 194–233 (MPYAPYVEPTGPDPAGMGGTYQQPANTFDTEPQGYQSQGY). Over residues 213–233 (TYQQPANTFDTEPQGYQSQGY) the composition is skewed to polar residues.

Belongs to the synaptogyrin family.

It localises to the cytoplasmic vesicle. Its subcellular location is the secretory vesicle. The protein resides in the synaptic vesicle membrane. The protein localises to the melanosome. Functionally, may play a role in regulated exocytosis. Modulates the localization of synaptophysin/SYP into synaptic-like microvesicles and may therefore play a role in synaptic-like microvesicle formation and/or maturation. Involved in the regulation of short-term and long-term synaptic plasticity. The protein is Synaptogyrin-1 of Homo sapiens (Human).